The following is a 58-amino-acid chain: MSVVALGATSITPPHGPESQGRPFPARGPVRPSARARPVPLWTYGYSEGTSRAGRRWG.

The segment at 1 to 37 is disordered; sequence MSVVALGATSITPPHGPESQGRPFPARGPVRPSARAR. The segment covering 25–37 has biased composition (low complexity); that stretch reads PARGPVRPSARAR.

This Streptomyces hygroscopicus protein is Curromycin resistance protein (cre).